Consider the following 111-residue polypeptide: uncharacterized protein (111 aa).

This is an uncharacterized protein from Caenorhabditis elegans.